A 279-amino-acid chain; its full sequence is Pantothenate synthetase (279 aa).

26–33 contributes to the ATP binding site; the sequence is MGNLHEGH. His33 serves as the catalytic Proton donor. Position 57 (Gln57) interacts with (R)-pantoate. Position 57 (Gln57) interacts with beta-alanine. Residue 144–147 coordinates ATP; the sequence is GKKD. Gln150 contacts (R)-pantoate. Residues Val173 and 181–184 contribute to the ATP site; that span reads LSSR.

This sequence belongs to the pantothenate synthetase family. As to quaternary structure, homodimer.

The protein resides in the cytoplasm. The catalysed reaction is (R)-pantoate + beta-alanine + ATP = (R)-pantothenate + AMP + diphosphate + H(+). It participates in cofactor biosynthesis; (R)-pantothenate biosynthesis; (R)-pantothenate from (R)-pantoate and beta-alanine: step 1/1. Catalyzes the condensation of pantoate with beta-alanine in an ATP-dependent reaction via a pantoyl-adenylate intermediate. The polypeptide is Pantothenate synthetase (Burkholderia ambifaria (strain ATCC BAA-244 / DSM 16087 / CCUG 44356 / LMG 19182 / AMMD) (Burkholderia cepacia (strain AMMD))).